Consider the following 717-residue polypeptide: Mitotic spindle assembly checkpoint protein MAD1 (717 aa).

Met1 is subject to N-acetylmethionine. Position 16 is a phosphoserine (Ser16). The stretch at 46 to 631 (EQSMQLEERA…QTKIQEFRKV (586 aa)) forms a coiled coil. At Lys61 the chain carries N6-acetyllysine; alternate. A Glycyl lysine isopeptide (Lys-Gly) (interchain with G-Cter in SUMO2); alternate cross-link involves residue Lys61. The short motif at 79 to 82 (KRAR) is the Nuclear localization signal element. Ser214 and Ser428 each carry phosphoserine. The necessary for interaction with NEK2 stretch occupies residues 380 to 532 (LLEERKKREI…EMQMERLTLQ (153 aa)). The tract at residues 540 to 551 (TKVLHMSLNPAS) is necessary for interaction with MAD2L1.

This sequence belongs to the MAD1 family. As to quaternary structure, homodimer. Dimerizes via its N- and C- terminal regions. Heterodimerizes with MAD2L1 in order to form a tetrameric MAD1L1-MAD2L1 core complex. Interacts with the closed conformation form of MAD2L1 (C-MAD2) and open conformation form of MAD2L1 (O-MAD2). It is unclear whether MAD1L1 dimerization promotes the conversion of closed to open conformation of MAD2L1. Formation of a heterotetrameric core complex containing two molecules each of MAD1L1 and of MAD2L1 promotes binding of another molecule of MAD2L1 to each MAD2L1, resulting in a heterohexamer. Perturbation of the original MAD1L1-MAD2L1 structure by the spindle checkpoint may decrease MAD2L1 affinity for MAD1L1. CDC20 can compete with MAD1L1 for MAD2L1 binding, until the attachment and/or tension dampen the checkpoint signal, preventing further release of MAD2L1 on to CDC20. Also able to interact with the BUB1/BUB3 complex. Interacts with NEK2. Interacts with TTK. Interacts with TPR; the interactions occurs in a microtubule-independent manner. Interacts with IK. Interacts with the viral Tax protein. Interacts with PRAP1. In terms of processing, phosphorylated; by BUB1. Become hyperphosphorylated in late S through M phases or after mitotic spindle damage.

The protein resides in the nucleus. The protein localises to the chromosome. Its subcellular location is the centromere. It localises to the kinetochore. It is found in the nucleus envelope. The protein resides in the cytoplasm. The protein localises to the cytoskeleton. Its subcellular location is the microtubule organizing center. It localises to the centrosome. It is found in the spindle. The protein resides in the spindle pole. Component of the spindle-assembly checkpoint that prevents the onset of anaphase until all chromosomes are properly aligned at the metaphase plate. Forms a heterotetrameric complex with the closed conformation form of MAD2L1 (C-MAD2) at unattached kinetochores during prometaphase, recruits an open conformation of MAD2L1 (O-MAD2) and promotes the conversion of O-MAD2 to C-MAD2, which ensures mitotic checkpoint signaling. The sequence is that of Mitotic spindle assembly checkpoint protein MAD1 (MAD1L1) from Cricetulus griseus (Chinese hamster).